Consider the following 118-residue polypeptide: Large ribosomal subunit protein uL24 (118 aa).

The protein belongs to the universal ribosomal protein uL24 family. As to quaternary structure, part of the 50S ribosomal subunit.

Its function is as follows. One of two assembly initiator proteins, it binds directly to the 5'-end of the 23S rRNA, where it nucleates assembly of the 50S subunit. One of the proteins that surrounds the polypeptide exit tunnel on the outside of the subunit. This Synechococcus sp. (strain CC9605) protein is Large ribosomal subunit protein uL24.